A 123-amino-acid chain; its full sequence is uncharacterized protein (123 aa).

Over residues 1 to 12 the composition is skewed to polar residues; that stretch reads MALNNVSLSSGD. Disordered regions lie at residues 1–25 and 53–91; these read MALN…SHGD and PRQA…RFSP. The segment covering 61 to 82 has biased composition (basic and acidic residues); sequence VRAESRRVDGGGRSPREPDGRG.

This is an uncharacterized protein from Homo sapiens (Human).